A 304-amino-acid chain; its full sequence is Aspartate carbamoyltransferase catalytic subunit (304 aa).

Carbamoyl phosphate is bound by residues Arg-55 and Thr-56. Residue Lys-84 coordinates L-aspartate. Arg-105, His-133, and Gln-136 together coordinate carbamoyl phosphate. Residues Arg-165 and Arg-226 each coordinate L-aspartate. The carbamoyl phosphate site is built by Leu-265 and Pro-266.

This sequence belongs to the aspartate/ornithine carbamoyltransferase superfamily. ATCase family. Heterooligomer of catalytic and regulatory chains.

The enzyme catalyses carbamoyl phosphate + L-aspartate = N-carbamoyl-L-aspartate + phosphate + H(+). Its pathway is pyrimidine metabolism; UMP biosynthesis via de novo pathway; (S)-dihydroorotate from bicarbonate: step 2/3. In terms of biological role, catalyzes the condensation of carbamoyl phosphate and aspartate to form carbamoyl aspartate and inorganic phosphate, the committed step in the de novo pyrimidine nucleotide biosynthesis pathway. The sequence is that of Aspartate carbamoyltransferase catalytic subunit from Methanothrix thermoacetophila (strain DSM 6194 / JCM 14653 / NBRC 101360 / PT) (Methanosaeta thermophila).